A 528-amino-acid polypeptide reads, in one-letter code: Propionate catabolism operon regulatory protein (528 aa).

Residues 218–461 form the Sigma-54 factor interaction domain; it reads MLGQSPQMEQ…RNMMERLALF (244 aa). 318–327 lines the ATP pocket; sequence AHGGTLFLDE. The segment at residues 508-527 is a DNA-binding region (H-T-H motif); that stretch reads KTAAANYLGISRTTFWRRLK.

Functionally, involved in the transcriptional regulation of the propionate catabolism operon. This Escherichia coli (strain K12) protein is Propionate catabolism operon regulatory protein (prpR).